The following is a 448-amino-acid chain: Probable glycine dehydrogenase (decarboxylating) subunit 1 (448 aa).

The protein belongs to the GcvP family. N-terminal subunit subfamily. The glycine cleavage system is composed of four proteins: P, T, L and H. In this organism, the P 'protein' is a heterodimer of two subunits.

It carries out the reaction N(6)-[(R)-lipoyl]-L-lysyl-[glycine-cleavage complex H protein] + glycine + H(+) = N(6)-[(R)-S(8)-aminomethyldihydrolipoyl]-L-lysyl-[glycine-cleavage complex H protein] + CO2. In terms of biological role, the glycine cleavage system catalyzes the degradation of glycine. The P protein binds the alpha-amino group of glycine through its pyridoxal phosphate cofactor; CO(2) is released and the remaining methylamine moiety is then transferred to the lipoamide cofactor of the H protein. This chain is Probable glycine dehydrogenase (decarboxylating) subunit 1, found in Geobacillus sp. (strain WCH70).